The following is a 209-amino-acid chain: Uracil phosphoribosyltransferase (209 aa).

Residues Arg-79, Arg-104, and 131 to 139 (DPMLATGNS) each bind 5-phospho-alpha-D-ribose 1-diphosphate. Uracil-binding positions include Ile-194 and 199-201 (GDA). A 5-phospho-alpha-D-ribose 1-diphosphate-binding site is contributed by Asp-200.

Belongs to the UPRTase family. Requires Mg(2+) as cofactor.

It carries out the reaction UMP + diphosphate = 5-phospho-alpha-D-ribose 1-diphosphate + uracil. It functions in the pathway pyrimidine metabolism; UMP biosynthesis via salvage pathway; UMP from uracil: step 1/1. Its activity is regulated as follows. Allosterically activated by GTP. Its function is as follows. Catalyzes the conversion of uracil and 5-phospho-alpha-D-ribose 1-diphosphate (PRPP) to UMP and diphosphate. This chain is Uracil phosphoribosyltransferase, found in Sinorhizobium medicae (strain WSM419) (Ensifer medicae).